We begin with the raw amino-acid sequence, 503 residues long: Cobyric acid synthase (503 aa).

The 190-residue stretch at aspartate 255 to phenylalanine 444 folds into the GATase cobBQ-type domain. Catalysis depends on cysteine 337, which acts as the Nucleophile. The active site involves histidine 436.

This sequence belongs to the CobB/CobQ family. CobQ subfamily.

The protein operates within cofactor biosynthesis; adenosylcobalamin biosynthesis. Catalyzes amidations at positions B, D, E, and G on adenosylcobyrinic A,C-diamide. NH(2) groups are provided by glutamine, and one molecule of ATP is hydrogenolyzed for each amidation. This chain is Cobyric acid synthase, found in Geobacillus sp. (strain WCH70).